A 108-amino-acid chain; its full sequence is Large ribosomal subunit protein uL24 (108 aa).

This sequence belongs to the universal ribosomal protein uL24 family. Part of the 50S ribosomal subunit.

Its function is as follows. One of two assembly initiator proteins, it binds directly to the 5'-end of the 23S rRNA, where it nucleates assembly of the 50S subunit. In terms of biological role, one of the proteins that surrounds the polypeptide exit tunnel on the outside of the subunit. The sequence is that of Large ribosomal subunit protein uL24 from Pelobacter propionicus (strain DSM 2379 / NBRC 103807 / OttBd1).